The sequence spans 220 residues: 7-cyano-7-deazaguanine synthase (220 aa).

Residue Ile7–Ala17 participates in ATP binding. The Zn(2+) site is built by Cys187, Cys195, Cys198, and Cys201.

It belongs to the QueC family. Requires Zn(2+) as cofactor.

It carries out the reaction 7-carboxy-7-deazaguanine + NH4(+) + ATP = 7-cyano-7-deazaguanine + ADP + phosphate + H2O + H(+). It participates in purine metabolism; 7-cyano-7-deazaguanine biosynthesis. Catalyzes the ATP-dependent conversion of 7-carboxy-7-deazaguanine (CDG) to 7-cyano-7-deazaguanine (preQ(0)). The sequence is that of 7-cyano-7-deazaguanine synthase from Campylobacter hominis (strain ATCC BAA-381 / DSM 21671 / CCUG 45161 / LMG 19568 / NCTC 13146 / CH001A).